The primary structure comprises 340 residues: Sodium/bile acid cotransporter 7 (340 aa).

Residues 1 to 10 (MRLLERVRKE) lie on the Cytoplasmic side of the membrane. The chain crosses the membrane as a helical span at residues 11–31 (WFMVGIVVAIGAAKLEPSVGV). The Extracellular segment spans residues 32–37 (NGGPLK). A helical transmembrane segment spans residues 38–58 (PEITVSYIAVATIFFNSGLSL). Topologically, residues 59–71 (KTEELTSALVHLK) are cytoplasmic. The helical transmembrane segment at 72 to 92 (LHLFIQVFTLAFFPTTIWLFL) threads the bilayer. Topologically, residues 93–116 (QLLSVTSINEWLLKGLQTVGCMPP) are extracellular. Residues 117–137 (PVSSAVILTKAVGGNEAAAIF) traverse the membrane as a helical segment. A topological domain (cytoplasmic) is located at residue Asn-138. Residues 139–159 (SAFGSFLGIVVTPVLLLLFLG) form a helical membrane-spanning segment. The Extracellular segment spans residues 160–163 (SSSS). Residues 164-184 (VPFTSIFSQLFMTVVVPLVIG) traverse the membrane as a helical segment. Topologically, residues 185–201 (QIVRRYIKDWLERKKPP) are cytoplasmic. Residues 202-222 (FGVVSSSVLLMIIYTTFCDTF) form a helical membrane-spanning segment. Residues 223–234 (SNPNIDLDKFSL) are Extracellular-facing. A helical membrane pass occupies residues 235–255 (ILILFIIVSIQLSFMLLTFVF). At 256-270 (STRNNSGFTPADTVA) the chain is on the cytoplasmic side. A helical membrane pass occupies residues 271–291 (IIFCSTHKSLTLGIPMLKIVF). The Extracellular segment spans residues 292-298 (AGHEHLS). A helical membrane pass occupies residues 299–319 (LISLPLLIYHPAQILLGSVLV). Residues 320–340 (PTIKSWMVSRQKGVKLTRPTV) lie on the Cytoplasmic side of the membrane.

The protein belongs to the bile acid:sodium symporter (BASS) (TC 2.A.28) family. In terms of tissue distribution, strongly expressed in liver, adrenal gland, small intestine and colon. Moderately expressed in heart, lung, kidney and spleen. Weakly expressed in brain.

Its subcellular location is the cell membrane. The protein localises to the endoplasmic reticulum membrane. The protein resides in the golgi apparatus membrane. Functionally, involved in teeth and skeletal development. Has an essential role in the biosynthesis and trafficking of glycosaminoglycans and glycoproteins to produce a proper functioning extracellular matrix. Required for extracellular matrix mineralization. Also involved in the regulation of cellular calcium homeostasis. Does not show transport activity towards bile acids or steroid sulfates (including taurocholate, cholate, chenodeoxycholate, estrone-3-sulfate, dehydroepiandrosterone sulfate (DHEAS) and pregnenolone sulfate). This is Sodium/bile acid cotransporter 7 (Slc10a7) from Rattus norvegicus (Rat).